A 305-amino-acid polypeptide reads, in one-letter code: MELIFLGTSAGVPTRTRNVTAILLNLQHPTQSGLWLFDCGEGTQHQLLHTAFNPGKLDKIFISHLHGDHLFGLPGLLCSRSMSGIVQPLTIYGPQGIREFVETALRISGSWTDYPLEIVEIGAGEIFDDGLRKVTAYPLEHPLECYGYRIEEHDKPGALNAQALKAAGVPPGPLFQELKAGKTIMLDDGRQINGADYLAAPVPGKALAIFGDTGPCDAALELAKGVDVMVHEATLDMAMEAKANSRGHSSTRQAAALAREAGVGKLIITHVSSRYDDKGCQHLLRECRSIFPATELANDFAVFNV.

Residues H64, H66, D68, H69, H141, D212, and H270 each contribute to the Zn(2+) site. Catalysis depends on D68, which acts as the Proton acceptor.

Belongs to the RNase Z family. RNase BN subfamily. As to quaternary structure, homodimer. Zn(2+) is required as a cofactor.

Functionally, zinc phosphodiesterase, which has both exoribonuclease and endoribonuclease activities. This is Ribonuclease BN from Escherichia coli O6:K15:H31 (strain 536 / UPEC).